The primary structure comprises 218 residues: Elongation factor Ts (218 aa).

The tract at residues 82-85 (TDFV) is involved in Mg(2+) ion dislocation from EF-Tu.

This sequence belongs to the EF-Ts family.

The protein localises to the cytoplasm. Its function is as follows. Associates with the EF-Tu.GDP complex and induces the exchange of GDP to GTP. It remains bound to the aminoacyl-tRNA.EF-Tu.GTP complex up to the GTP hydrolysis stage on the ribosome. The protein is Elongation factor Ts of Prochlorococcus marinus (strain NATL1A).